The primary structure comprises 300 residues: Transcription initiation factor IIB 1 (300 aa).

The TFIIB-type zinc finger occupies 3-34; sequence GKRVCPVCGSTEFIYDPSRGEIVCKVCGYVIE. 4 residues coordinate Zn(2+): C7, C10, C26, and C29. 2 repeat units span residues 114–197 and 210–291.

Belongs to the TFIIB family.

In terms of biological role, stabilizes TBP binding to an archaeal box-A promoter. Also responsible for recruiting RNA polymerase II to the pre-initiation complex (DNA-TBP-TFIIB). This is Transcription initiation factor IIB 1 from Thermococcus kodakarensis (strain ATCC BAA-918 / JCM 12380 / KOD1) (Pyrococcus kodakaraensis (strain KOD1)).